The chain runs to 162 residues: MDEKDLATQPEEAGQDPRLPGPHEDPRRQERAEAQAKKGPLAPDAQGKRLGQGPPKAGGRLLSLKGDRAFQRLRKGRAGRGRFVSVKWLPAPEARVGIVVSKKVGKAVVRNKVKRRLREILRRLHLPKAHILLVASPEAREAGFAELFQDVVRALRKSGLIQ.

The disordered stretch occupies residues 1 to 62 (MDEKDLATQP…GPPKAGGRLL (62 aa)). Over residues 21-36 (GPHEDPRRQERAEAQA) the composition is skewed to basic and acidic residues.

This sequence belongs to the RnpA family. As to quaternary structure, consists of a catalytic RNA component (M1 or rnpB) and a protein subunit.

It carries out the reaction Endonucleolytic cleavage of RNA, removing 5'-extranucleotides from tRNA precursor.. In terms of biological role, RNaseP catalyzes the removal of the 5'-leader sequence from pre-tRNA to produce the mature 5'-terminus. It can also cleave other RNA substrates such as 4.5S RNA. The protein component plays an auxiliary but essential role in vivo by binding to the 5'-leader sequence and broadening the substrate specificity of the ribozyme. In Thermus aquaticus, this protein is Ribonuclease P protein component.